The primary structure comprises 837 residues: Ubiquitin carboxyl-terminal hydrolase A (837 aa).

The segment at 166–277 (PSAFAESIIQ…QHLTHWGLNP (112 aa)) adopts a UBP-type; degenerate zinc-finger fold. Residues 319–835 (TGIENLGNSC…LGYIYFYKRQ (517 aa)) form the USP domain. C328 serves as the catalytic Nucleophile. Positions 628-669 (SFNQEVLDTLLSMDFPLVRCKKALLATGGKDAELAMNWIFEH) constitute a UBA 1 domain. Residues 676 to 695 (DIEQTPVNNNNNNNNSSNSN) are disordered. Low complexity predominate over residues 683–695 (NNNNNNNNSSNSN). In terms of domain architecture, UBA 2 spans 700–740 (VFNSQDVDNIIGMGFTDSQAKLALKNTKGNLERAADWLFSH). The active-site Proton acceptor is the H797.

Belongs to the peptidase C19 family.

The catalysed reaction is Thiol-dependent hydrolysis of ester, thioester, amide, peptide and isopeptide bonds formed by the C-terminal Gly of ubiquitin (a 76-residue protein attached to proteins as an intracellular targeting signal).. Its function is as follows. Required for development but not growth. This is Ubiquitin carboxyl-terminal hydrolase A (ubpA) from Dictyostelium discoideum (Social amoeba).